Here is a 256-residue protein sequence, read N- to C-terminus: ATP synthase subunit a (256 aa).

The next 6 helical transmembrane spans lie at 33-53 (ITTFTVYSVFILIVILGLTLL), 92-112 (YFPLIYTFFIFIFTANLIGMI), 122-142 (MVFIISLSVVIWLGVTIIGLY), 148-168 (FFALFVPAGCPLALAPLLVLI), 191-211 (GHLLMVILGGLVFNLMSVSIV), and 235-255 (MIQSYVFAILASGYIKDGLYL).

It belongs to the ATPase A chain family. In terms of assembly, F-type ATPases have 2 components, CF(1) - the catalytic core - and CF(0) - the membrane proton channel. CF(1) has five subunits: alpha(3), beta(3), gamma(1), delta(1), epsilon(1). CF(0) has three main subunits: a, b and c.

Its subcellular location is the mitochondrion inner membrane. Mitochondrial membrane ATP synthase (F(1)F(0) ATP synthase or Complex V) produces ATP from ADP in the presence of a proton gradient across the membrane which is generated by electron transport complexes of the respiratory chain. F-type ATPases consist of two structural domains, F(1) - containing the extramembraneous catalytic core and F(0) - containing the membrane proton channel, linked together by a central stalk and a peripheral stalk. During catalysis, ATP synthesis in the catalytic domain of F(1) is coupled via a rotary mechanism of the central stalk subunits to proton translocation. Key component of the proton channel; it may play a direct role in the translocation of protons across the membrane. This is ATP synthase subunit a (ATP6) from Wickerhamomyces canadensis (Yeast).